Reading from the N-terminus, the 1033-residue chain is Tyrosine-protein kinase-like otk (1033 aa).

The signal sequence occupies residues 1–22; sequence MTARMISIYGLVLASMMASVLA. Over 23 to 581 the chain is Extracellular; it reads SSSRFQRLPQ…GGDGFLVTRA (559 aa). 5 Ig-like C2-type domains span residues 25 to 114, 113 to 199, 251 to 365, 368 to 463, and 468 to 558; these read SRFQ…AKLS, LSVI…RVMS, PEDL…VPVS, PGVL…VAIN, and PKFS…VQLI. Residue Asn-39 is glycosylated (N-linked (GlcNAc...) asparagine). 4 disulfide bridges follow: Cys-46–Cys-95, Cys-137–Cys-188, Cys-276–Cys-354, and Cys-399–Cys-447. N-linked (GlcNAc...) asparagine glycosylation is found at Asn-336, Asn-417, Asn-429, Asn-444, Asn-457, Asn-512, and Asn-524. Cys-490 and Cys-542 form a disulfide bridge. A helical membrane pass occupies residues 582–602; sequence VLITMTVALAYIVLVVGLMLW. At 603–1033 the chain is on the cytoplasmic side; that stretch reads CRYRRQARKA…LSKAMQSAEK (431 aa). Disordered stretches follow at residues 617–679 and 718–760; these read LSTK…KKSA and SPSD…KTSM. The span at 655 to 673 shows a compositional bias: polar residues; it reads KSSGDAQKSDDTACSQQSR. A Phosphoserine modification is found at Ser-678. The Protein kinase; inactive domain maps to 692–1028; the sequence is LSELIQIGRG…QLGAALSKAM (337 aa). The span at 720 to 731 shows a compositional bias: basic and acidic residues; it reads SDKDADTEKQHS.

This sequence belongs to the protein kinase superfamily. Tyr protein kinase family. Insulin receptor subfamily. Interacts with plexA; component of a receptor complex that mediates the repulsive signaling in response to Semaphorin ligands.

The protein resides in the cell membrane. In terms of biological role, acts as a calcium-dependent, homophilic cell adhesion molecule that regulates neural recognition during the development of the nervous system. Component of the repulsive Plexin signaling response to regulate motor axon guidance at the embryonic stage. Also component of a receptor complex that is required in the adult visual system to innervate the lamina layer; specific targeting of R1-R6 axons. The sequence is that of Tyrosine-protein kinase-like otk from Drosophila yakuba (Fruit fly).